Here is a 447-residue protein sequence, read N- to C-terminus: Protein disulfide-isomerase like 2-2 (447 aa).

Residues 1–26 (MERKMYKSTVFPICCLLFALFDRGNA) form the signal peptide. Thioredoxin domains follow at residues 27-139 (LYGS…QIKA) and 161-275 (KKKS…QLES). Active-site nucleophile residues include cysteine 62 and cysteine 65. Cysteine 62 and cysteine 65 are oxidised to a cystine. The interval 146–170 (DGKTSGTKNGGGSSEKKKSEPSASV) is disordered. Residue asparagine 173 is glycosylated (N-linked (GlcNAc...) asparagine). Active-site nucleophile residues include cysteine 197 and cysteine 200. Cysteine 197 and cysteine 200 are joined by a disulfide. A Prevents secretion from ER motif is present at residues 444–447 (KDDL).

It belongs to the protein disulfide isomerase family. Widely expressed.

It localises to the endoplasmic reticulum lumen. The enzyme catalyses Catalyzes the rearrangement of -S-S- bonds in proteins.. Functionally, acts as a protein-folding catalyst that interacts with nascent polypeptides to catalyze the formation, isomerization, and reduction or oxidation of disulfide bonds. This chain is Protein disulfide-isomerase like 2-2 (PDIL2-2), found in Arabidopsis thaliana (Mouse-ear cress).